Consider the following 392-residue polypeptide: DNA-directed RNA polymerase subunit Rpo1C (392 aa).

The protein belongs to the RNA polymerase beta' chain family. As to quaternary structure, part of the RNA polymerase complex.

It localises to the cytoplasm. It carries out the reaction RNA(n) + a ribonucleoside 5'-triphosphate = RNA(n+1) + diphosphate. In terms of biological role, DNA-dependent RNA polymerase (RNAP) catalyzes the transcription of DNA into RNA using the four ribonucleoside triphosphates as substrates. Forms part of the jaw domain. This is DNA-directed RNA polymerase subunit Rpo1C from Metallosphaera sedula (strain ATCC 51363 / DSM 5348 / JCM 9185 / NBRC 15509 / TH2).